The sequence spans 335 residues: Meiotic expression up-regulated protein 14 (335 aa).

The protein localises to the cytoplasm. It is found in the cytoskeleton. Its subcellular location is the microtubule organizing center. The protein resides in the spindle pole body. It localises to the nucleus membrane. The protein localises to the prospore membrane. Has a role in nuclear division during meiosis II where it stabilizes the proper segregation of the spindle pole bodies. Also has a role in the formation and extension of the forespore membrane. The protein is Meiotic expression up-regulated protein 14 (meu14) of Schizosaccharomyces pombe (strain 972 / ATCC 24843) (Fission yeast).